Reading from the N-terminus, the 556-residue chain is Arginine--tRNA ligase 1 (556 aa).

A 'HIGH' region motif is present at residues 132-142 (ANPTGNLHLGH).

Belongs to the class-I aminoacyl-tRNA synthetase family. As to quaternary structure, monomer.

It localises to the cytoplasm. It catalyses the reaction tRNA(Arg) + L-arginine + ATP = L-arginyl-tRNA(Arg) + AMP + diphosphate. The chain is Arginine--tRNA ligase 1 (argS1) from Halalkalibacterium halodurans (strain ATCC BAA-125 / DSM 18197 / FERM 7344 / JCM 9153 / C-125) (Bacillus halodurans).